The sequence spans 241 residues: Ubiquinone biosynthesis O-methyltransferase (241 aa).

4 residues coordinate S-adenosyl-L-methionine: Arg44, Gly64, Asp85, and Met129.

This sequence belongs to the methyltransferase superfamily. UbiG/COQ3 family.

The catalysed reaction is a 3-demethylubiquinol + S-adenosyl-L-methionine = a ubiquinol + S-adenosyl-L-homocysteine + H(+). The enzyme catalyses a 3-(all-trans-polyprenyl)benzene-1,2-diol + S-adenosyl-L-methionine = a 2-methoxy-6-(all-trans-polyprenyl)phenol + S-adenosyl-L-homocysteine + H(+). Its pathway is cofactor biosynthesis; ubiquinone biosynthesis. Its function is as follows. O-methyltransferase that catalyzes the 2 O-methylation steps in the ubiquinone biosynthetic pathway. The chain is Ubiquinone biosynthesis O-methyltransferase from Serratia proteamaculans (strain 568).